The primary structure comprises 389 residues: Chalcone synthase 1 (389 aa).

Cys-164 is a catalytic residue.

This sequence belongs to the thiolase-like superfamily. Chalcone/stilbene synthases family.

The enzyme catalyses (E)-4-coumaroyl-CoA + 3 malonyl-CoA + 3 H(+) = 2',4,4',6'-tetrahydroxychalcone + 3 CO2 + 4 CoA. Its pathway is secondary metabolite biosynthesis; flavonoid biosynthesis. The primary product of this enzyme is 4,2',4',6'-tetrahydroxychalcone (also termed naringenin-chalcone or chalcone) which can under specific conditions spontaneously isomerize into naringenin. The chain is Chalcone synthase 1 (CHS1) from Cicer arietinum (Chickpea).